We begin with the raw amino-acid sequence, 98 residues long: Pore-forming peptide amoebapore A (98 aa).

Positions 1-21 (MKAIVFVLIFAVAFAVTATHQ) are cleaved as a signal peptide. The 77-residue stretch at 22–98 (GEILCNLCTG…NAICAKIHAC (77 aa)) folds into the Saposin B-type domain. 3 disulfides stabilise this stretch: C26-C98, C29-C92, and C56-C67.

Monomer (at pH below 4 and pH above 6). Homodimer (at pH 4-6). Hexamer; formed during insertion in the membrane.

The protein resides in the cytoplasmic granule. In terms of biological role, forms pores in the cell membrane of host cells. Has antibacterial activity against M.luteus, no activity against E.coli. Implicated in the cytolytic activity of the parasite. This is Pore-forming peptide amoebapore A from Entamoeba histolytica (strain ATCC 30459 / HM-1:IMSS / ABRM).